We begin with the raw amino-acid sequence, 52 residues long: MSTQYTYEQIAEDFRLWGEYMDPNAEMTEEEFQALSTEEKVAMQVEAFGAEA.

In terms of biological role, allows the phage to evade the CRISPR/Cas system type I-E. Prevents the DNA-binding activity of the CRISPR-Cas complex. This Pseudomonas aeruginosa (Bacteriophage D3112) protein is Anti-CRISPR protein 31.